A 726-amino-acid polypeptide reads, in one-letter code: PWWP domain-containing protein 2 (726 aa).

Positions 1–10 are enriched in basic and acidic residues; the sequence is MSTESERIES. The segment at 1 to 26 is disordered; sequence MSTESERIESVSEANASSLEVGNDQM. Residues 12 to 26 show a composition bias toward polar residues; it reads SEANASSLEVGNDQM. One can recognise a PWWP domain in the interval 199–260; the sequence is DSDLVWAKVR…ASRIKPFRQH (62 aa). A disordered region spans residues 392 to 441; it reads APKISPAEEQSSLVEVSDPEPTKSKQVYTKRRKTNLQTEQSSLVEVSDPD. Positions 426–435 are enriched in polar residues; the sequence is NLQTEQSSLV. Short sequence motifs (nuclear localization signal) lie at residues 460–467 and 495–502; these read KKKEKTLA and KKRKVVQS. Disordered regions lie at residues 472-545 and 568-726; these read EKRV…PQKA and TRLL…VSAE. Residues 494 to 512 show a composition bias toward basic residues; the sequence is EKKRKVVQSKVPKSTKKIK. The segment covering 606 to 634 has biased composition (polar residues); sequence SPSTTLSSPHAASVTKTTSGKSNSVSLDH. Residues 658–688 show a composition bias toward basic and acidic residues; that stretch reads LESRDLKDSSKEQVVHEDKKEAANVADEKSI.

The protein belongs to the PDP family. In terms of assembly, interacts with DEK3. Binds to MSI4/FVE and MSI5. Component of the PRC2 (polycomb repressive complex 2) complex which regulates histone methylation on histone H3K27.

The protein localises to the nucleus. Functionally, together with PDP1, PDP3 and PDP6, interacts with MSI4/FVE and MSI5 to suppress FLC, MAF4 and MAF5 expression by regulating the function of the PRC2 complex and modulating H3K27me3 level, thereby promoting flowering. The sequence is that of PWWP domain-containing protein 2 from Arabidopsis thaliana (Mouse-ear cress).